Consider the following 253-residue polypeptide: Tetraspanin-3 (253 aa).

At 1-11 the chain is on the cytoplasmic side; sequence MGQCGITSSKT. A helical membrane pass occupies residues 12–32; sequence VLVFLNLIFWGAAGILCYVGA. Over 33 to 50 the chain is Extracellular; the sequence is YVFITYDDYDHFFEDVYT. The chain crosses the membrane as a helical span at residues 51-71; the sequence is LIPAVVIIAVGALLFIIGLIG. Topologically, residues 72 to 85 are cytoplasmic; sequence CCATIRESRCGLAT. Residues 86–106 form a helical membrane-spanning segment; sequence FVIILLLVFVTEVVVVVLGYV. At 107–212 the chain is on the extracellular side; sequence YRAKVENEVD…KKLQEIMMHV (106 aa). 4 N-linked (GlcNAc...) asparagine glycosylation sites follow: asparagine 127, asparagine 152, asparagine 167, and asparagine 183. Residues 213-233 form a helical membrane-spanning segment; that stretch reads IWAALAFAAIQLLGMLCACIV. Topologically, residues 234–253 are cytoplasmic; sequence LCRRSRDPAYELLITGGAYA.

Belongs to the tetraspanin (TM4SF) family. As to quaternary structure, interacts with claudin-11/CLDN11 and integrins.

It localises to the membrane. Functionally, regulates the proliferation and migration of oligodendrocytes, a process essential for normal myelination and repair. This is Tetraspanin-3 (TSPAN3) from Bos taurus (Bovine).